A 101-amino-acid chain; its full sequence is Small ribosomal subunit protein uS10 (101 aa).

This sequence belongs to the universal ribosomal protein uS10 family. Part of the 30S ribosomal subunit.

Functionally, involved in the binding of tRNA to the ribosomes. The sequence is that of Small ribosomal subunit protein uS10 from Saccharopolyspora erythraea (strain ATCC 11635 / DSM 40517 / JCM 4748 / NBRC 13426 / NCIMB 8594 / NRRL 2338).